The sequence spans 212 residues: uncharacterized protein (212 aa).

The 83-residue stretch at 105-187 (NTIYLVEGDF…QVKVVQLKGK (83 aa)) folds into the Toprim domain.

This is an uncharacterized protein from Mycoplasma pneumoniae (strain ATCC 29342 / M129 / Subtype 1) (Mycoplasmoides pneumoniae).